The sequence spans 99 residues: Transposase InsE for insertion sequence IS3A (99 aa).

Residues methionine 1–serine 21 form a disordered region.

The protein belongs to the transposase 8 family.

Its function is as follows. Involved in the transposition of the insertion sequence IS3. The polypeptide is Transposase InsE for insertion sequence IS3A (insE1) (Escherichia coli (strain K12)).